The sequence spans 346 residues: NADH-ubiquinone oxidoreductase chain 2 (346 aa).

A run of 10 helical transmembrane segments spans residues 25 to 45 (NLLLMWVGLEMSLLAIIPLLA), 56 to 76 (ATKYFLTQATASMIILLVIIL), 94 to 114 (LLNMMLISLAMKLGLAPFHYW), 122 to 142 (IPLHIGLILLTWQKIAPLSIL), 148 to 168 (LLNPTITTILAISSVFVGAWG), 178 to 198 (IMAYSSIAHMGWMTAILPYNP), 200 to 220 (LTLLNLTIYILLTVPMFITLM), 240 to 260 (ILTMTSIILLSLGGLPPLTGF), 278 to 298 (LSTLMAIMALLSLFFYTRLIY), and 325 to 345 (FILPTLTVLSTLTLPLSSQLI).

This sequence belongs to the complex I subunit 2 family. Core subunit of respiratory chain NADH dehydrogenase (Complex I) which is composed of 45 different subunits. Interacts with TMEM242.

The protein localises to the mitochondrion inner membrane. The catalysed reaction is a ubiquinone + NADH + 5 H(+)(in) = a ubiquinol + NAD(+) + 4 H(+)(out). In terms of biological role, core subunit of the mitochondrial membrane respiratory chain NADH dehydrogenase (Complex I) which catalyzes electron transfer from NADH through the respiratory chain, using ubiquinone as an electron acceptor. Essential for the catalytic activity and assembly of complex I. This Rattus norvegicus (Rat) protein is NADH-ubiquinone oxidoreductase chain 2.